The following is a 1133-amino-acid chain: MLRTRTTKTLSTVARTTRAIQYYRSIAKTAAVSQRRFASTLTVRDVENIKPSHIIKSPTWQEFQHQLKDPRYMEHFAQLDAQFARHFMATNSGKSILAKDDSTSQKKDEDVKIVPDEKDTDNDVEPTRDDEIVNKDQEGEASKNSRSSASGGGQSSSSRSDSGDGSSKQKPPKDVPEVYPQMLALPIARRPLFPGFYKAVVISDERVMKAIKEMLDRQQPYIGAFMLKNSEEDTDVITDKNDVYDVGVLAQITSAFPSKDEKTGTETMTALLYPHRRIKIDELFPPNEEKEKSKEQAKDTDTETTVVEDANNPEDQESTSPATPKLEDIVVERIPDSELQHHKRVEATEEESEELDDIQEGEDINPTEFLKNYNVSLVNVLNLEDEPFDRKSPVINALTSEILKVFKEISQLNTMFREQIATFSASIQSATTNIFEEPARLADFAAAVSAGEEDELQDILSSLNIEHRLEKSLLVLKKELMNAELQNKISKDVETKIQKRQREYYLMEQLKGIKRELGIDDGRDKLIDTYKERIKSLKLPDSVQKIFDDEITKLSTLETSMSEFGVIRNYLDWLTSIPWGKHSKEQYSIPRAKKILDEDHYGMVDVKDRILEFIAVGKLLGKVDGKIICFVGPPGVGKTSIGKSIARALNRKFFRFSVGGMTDVAEIKGHRRTYIGALPGRVVQALKKCQTQNPLILIDEIDKIGHGGIHGDPSAALLEVLDPEQNNSFLDNYLDIPIDLSKVLFVCTANSLETIPRPLLDRMEVIELTGYVAEDKVKIAEQYLVPSAKKSAGLENSHVDMTEDAITALMKYYCRESGVRNLKKHIEKIYRKAALQVVKKLSIEDSPTSSADSKPKESVSSEEKAENNAKSSSEKTKDNNSEKTSDDIEALKTSEKINVSISQKNLKDYVGPPVYTTDRLYETTPPGVVMGLAWTNMGGCSLYVESVLEQPLHNCKHPTFERTGQLGDVMKESSRLAYSFAKMYLAQKFPENRFFEKASIHLHCPEGATPKDGPSAGVTMATSFLSLALNKSIDPTVAMTGELTLTGKVLRIGGLREKAVAAKRSGAKTIIFPKDNLNDWEELPDNVKEGLEPLAADWYNDIFQKLFKDVNTKEGNSVWKAEFEILDAKKEKD.

The transit peptide at M1–F37 directs the protein to the mitochondrion. Positions A38–A98 are cleaved as a propeptide — removed in mature form; by autocatalysis. Composition is skewed to basic and acidic residues over residues A98–E117 and E125–K143. Disordered stretches follow at residues A98–P176 and E282–I358. Over residues S145–S166 the composition is skewed to low complexity. A Lon N-terminal domain is found at M182–L480. Composition is skewed to basic and acidic residues over residues E282 to D301 and K325 to Q340. A compositionally biased stretch (acidic residues) spans T348–I358. ATP is bound at residue G632–T639. The interval K839–K892 is dispensable for catalytic activity. The disordered stretch occupies residues E844 to E889. A compositionally biased stretch (basic and acidic residues) spans S853 to E889. Residues T923 to D1109 enclose the Lon proteolytic domain. Residues S1015 and K1058 contribute to the active site.

It belongs to the peptidase S16 family. As to quaternary structure, homohexamer. Organized in a ring with a central cavity. The ATP-binding and proteolytic domains (AP-domain) form a hexameric chamber. Oligomerization is independent of its proteolytic activity and the autocatalytic maturation of its subunits.

It localises to the mitochondrion matrix. The enzyme catalyses Hydrolysis of proteins in presence of ATP.. Functionally, ATP-dependent serine protease that mediates the selective degradation of misfolded, unassembled or oxidatively damaged polypeptides as well as certain short-lived regulatory proteins in the mitochondrial matrix. May also have a chaperone function in the assembly of inner membrane protein complexes. Participates in the regulation of mitochondrial gene expression and in the maintenance of the integrity of the mitochondrial genome. Binds to mitochondrial DNA in a site-specific manner. Endogenous substrates include ABF2, ACO2, ILV1, ILV2, LSC1, LYS4, MGM101 and several oxidized proteins. The 2 nucleic acid-binding proteins ABF2 and MGM101 are protected from degradation by PIM1 when they are bound to DNA. In Saccharomyces cerevisiae (strain ATCC 204508 / S288c) (Baker's yeast), this protein is Lon protease homolog, mitochondrial.